Here is a 985-residue protein sequence, read N- to C-terminus: UPF0182 protein Cgl0786/cg0896 (985 aa).

7 consecutive transmembrane segments (helical) span residues 19–39, 63–83, 115–135, 176–196, 215–235, 262–282, and 290–310; these read VTWI…SVGF, IVLF…AGYF, VMVI…QRSW, SMML…MGGI, TQLA…YWLD, KIIL…AIFL, and LAVV…PLML. Residues 904–944 are disordered; it reads KEAQDIEEVDGTATTPSTDETDTDTDQPATETPTAPVSEAE. Residues 929–939 are compositionally biased toward low complexity; it reads DQPATETPTAP.

This sequence belongs to the UPF0182 family.

The protein resides in the cell membrane. The protein is UPF0182 protein Cgl0786/cg0896 of Corynebacterium glutamicum (strain ATCC 13032 / DSM 20300 / JCM 1318 / BCRC 11384 / CCUG 27702 / LMG 3730 / NBRC 12168 / NCIMB 10025 / NRRL B-2784 / 534).